The following is an 876-amino-acid chain: Probable LRR receptor-like protein kinase At1g51890 (876 aa).

An N-terminal signal peptide occupies residues 1–19 (MRFLSFLIFVFAVLGLVQA). Residues 20–500 (QDQSGFISLD…TGKNSTNVVA (481 aa)) lie on the Extracellular side of the membrane. N45, N90, N138, N177, N251, N259, N284, N290, N327, N335, N397, N412, and N417 each carry an N-linked (GlcNAc...) asparagine glycan. LRR repeat units lie at residues 407–430 (QIIS…SKLT), 431–453 (HLRE…FSDM), and 455–476 (NLTL…ETLQ). 5 N-linked (GlcNAc...) asparagine glycosylation sites follow: N455, N460, N468, N481, and N494. The helical transmembrane segment at 501 to 521 (IAASVASVFAVLVILAIVFVV) threads the bilayer. Residues 522 to 872 (IRKKQRTNEA…FSPSSASDFS (351 aa)) lie on the Cytoplasmic side of the membrane. T561 carries the phosphothreonine modification. Residues 570–842 (KNFERVLGKG…HVVMELNECL (273 aa)) form the Protein kinase domain. ATP is bound by residues 576–584 (LGKGGFGTV) and K597. Position 642 is a phosphotyrosine (Y642). D694 functions as the Proton acceptor in the catalytic mechanism. Phosphothreonine occurs at positions 729 and 734. Y742 is subject to Phosphotyrosine.

The protein belongs to the protein kinase superfamily. Ser/Thr protein kinase family.

It is found in the cell membrane. The catalysed reaction is L-seryl-[protein] + ATP = O-phospho-L-seryl-[protein] + ADP + H(+). It carries out the reaction L-threonyl-[protein] + ATP = O-phospho-L-threonyl-[protein] + ADP + H(+). This is Probable LRR receptor-like protein kinase At1g51890 from Arabidopsis thaliana (Mouse-ear cress).